A 414-amino-acid chain; its full sequence is Esterase FrsA (414 aa).

It belongs to the FrsA family.

The enzyme catalyses a carboxylic ester + H2O = an alcohol + a carboxylate + H(+). Its function is as follows. Catalyzes the hydrolysis of esters. This chain is Esterase FrsA, found in Escherichia coli (strain K12 / DH10B).